Here is a 511-residue protein sequence, read N- to C-terminus: Maturase K (511 aa).

It belongs to the intron maturase 2 family. MatK subfamily.

The protein resides in the plastid. It is found in the chloroplast. Usually encoded in the trnK tRNA gene intron. Probably assists in splicing its own and other chloroplast group II introns. The polypeptide is Maturase K (Trifolium burchellianum (Wild clover)).